The sequence spans 853 residues: DNA mismatch repair protein MutS (853 aa).

614-621 (GPNMGGKS) contributes to the ATP binding site.

The protein belongs to the DNA mismatch repair MutS family.

Its function is as follows. This protein is involved in the repair of mismatches in DNA. It is possible that it carries out the mismatch recognition step. This protein has a weak ATPase activity. This is DNA mismatch repair protein MutS from Klebsiella pneumoniae subsp. pneumoniae (strain ATCC 700721 / MGH 78578).